The primary structure comprises 551 residues: MAQFVQVLAEIGDFGRFQIQLLILLCVLNFLSPFYFFAHVFMVLDEPHHCAVAWVKNHTFNLSAAEQLVLSVPLDTAGHPEPCLMFRPPPANASLQDILSHRFNETQPCDMGWEYPENRLPSLKNEFNLVCDRKHLKDTTQSVFMAGLLVGTLMFGPLCDRIGRKATILAQLLLFTLIGLATAFVPSFELYMALRFAVATAVAGLSFSNVTLLTEWVGPSWRTQAVVLAQCNFSLGQMVLAGLAYGFRNWRLLQITGTAPGLLLFFYFWALPESARWLLTRGRMDEAIQLIQKAASVNRRKLSPELMNQLVPEKTGPSGNALDLFRHPQLRKVTLIIFCVWFVDSLGYYGLSLQVGDFGLDVYLTQLIFGAVEVPARCSSIFMMQRFGRKWSQLGTLVLGGLMCIIIIFIPADLPVVVTMLAVVGKMATAAAFTISYVYSAELFPTILRQTGMGLVGIFSRIGGILTPLVILLGEYHAALPMLIYGSLPIVAGLLCTLLPETHGQGLKDTLQDLELGPHPRSPKSVPSEKETEAKGRTSSPGVAFVSSTYF.

Topologically, residues 1-20 (MAQFVQVLAEIGDFGRFQIQ) are cytoplasmic. Residues 21–41 (LLILLCVLNFLSPFYFFAHVF) traverse the membrane as a helical segment. Residues 42 to 138 (MVLDEPHHCA…LVCDRKHLKD (97 aa)) lie on the Extracellular side of the membrane. N-linked (GlcNAc...) asparagine glycans are attached at residues Asn-57, Asn-61, Asn-92, and Asn-104. A helical transmembrane segment spans residues 139–159 (TTQSVFMAGLLVGTLMFGPLC). Topologically, residues 160–167 (DRIGRKAT) are cytoplasmic. The chain crosses the membrane as a helical span at residues 168-188 (ILAQLLLFTLIGLATAFVPSF). Residues 189–195 (ELYMALR) are Extracellular-facing. The chain crosses the membrane as a helical span at residues 196-216 (FAVATAVAGLSFSNVTLLTEW). Residues 217–224 (VGPSWRTQ) lie on the Cytoplasmic side of the membrane. The chain crosses the membrane as a helical span at residues 225–245 (AVVLAQCNFSLGQMVLAGLAY). The Extracellular portion of the chain corresponds to 246-251 (GFRNWR). Residues 252–272 (LLQITGTAPGLLLFFYFWALP) traverse the membrane as a helical segment. Topologically, residues 273 to 332 (ESARWLLTRGRMDEAIQLIQKAASVNRRKLSPELMNQLVPEKTGPSGNALDLFRHPQLRK) are cytoplasmic. A helical membrane pass occupies residues 333 to 353 (VTLIIFCVWFVDSLGYYGLSL). Residue Gln-354 is a topological domain, extracellular. The chain crosses the membrane as a helical span at residues 355-375 (VGDFGLDVYLTQLIFGAVEVP). The Cytoplasmic segment spans residues 376–397 (ARCSSIFMMQRFGRKWSQLGTL). The helical transmembrane segment at 398–418 (VLGGLMCIIIIFIPADLPVVV) threads the bilayer. Over 419–427 (TMLAVVGKM) the chain is Extracellular. Residues 428–448 (ATAAAFTISYVYSAELFPTIL) form a helical membrane-spanning segment. Topologically, residues 449–452 (RQTG) are cytoplasmic. The helical transmembrane segment at 453 to 473 (MGLVGIFSRIGGILTPLVILL) threads the bilayer. Over 474-478 (GEYHA) the chain is Extracellular. Residues 479–499 (ALPMLIYGSLPIVAGLLCTLL) traverse the membrane as a helical segment. Residues 500 to 551 (PETHGQGLKDTLQDLELGPHPRSPKSVPSEKETEAKGRTSSPGVAFVSSTYF) are Cytoplasmic-facing. Residues 511-551 (LQDLELGPHPRSPKSVPSEKETEAKGRTSSPGVAFVSSTYF) are disordered. Positions 527-536 (PSEKETEAKG) are enriched in basic and acidic residues. A compositionally biased stretch (polar residues) spans 537-551 (RTSSPGVAFVSSTYF).

This sequence belongs to the major facilitator (TC 2.A.1) superfamily. Organic cation transporter (TC 2.A.1.19) family. In terms of processing, glycosylated. In terms of tissue distribution, ubiquitous. Highly expressed in kidneys and to a weaker extent in brain, heart, and intestine. In kidneys, expressed in proximal convoluted tubule. In kidneys, also expressed in cortical collecting duct, whereas glomerulus and thick ascending limb exhibit no expression.

It is found in the apical cell membrane. The enzyme catalyses urate(out) + (S)-lactate(in) = urate(in) + (S)-lactate(out). It carries out the reaction urate(out) + succinate(in) = urate(in) + succinate(out). It catalyses the reaction urate(out) + glutathione(in) = urate(in) + glutathione(out). The catalysed reaction is nicotinate(in) + urate(out) = nicotinate(out) + urate(in). The enzyme catalyses orotate(out) + a carboxylate(in) = orotate(in) + a carboxylate(out). Anion antiporter that mediates the transport of urate, orotate and nicotinate in exchange for organic or inorganic anions. Translocates urate and orotate across the apical membrane of proximal tubule epithelial cells and involved in urate renal reabsorption. Possibly involved in orotate renal reabsorption and nicotinate intestinal reabsorption. Mediates urate uptake by an exchange with organic anions such as (S)-lactate, succinate, glutathione and nicotinate. Urate and orotate transports are Cl(-)-dependent. Shows similar transport characteristics as the urate/orotate renal antiporter SLC22A12/URAT1 and may act as a compensator of SLC22A12/URAT1 in certain conditions. The protein is Solute carrier family 22 member 13 of Homo sapiens (Human).